The primary structure comprises 183 residues: UPF0098 protein YbcL (183 aa).

The first 21 residues, 1 to 21 (MKTLIVSTVLAFITFSAQAAA), serve as a signal peptide directing secretion. Cys46 and Cys129 form a disulfide bridge.

The protein belongs to the UPF0098 family. As to quaternary structure, homodimer.

Its subcellular location is the periplasm. In Escherichia coli (strain K12), this protein is UPF0098 protein YbcL (ybcL).